An 89-amino-acid chain; its full sequence is Small ribosomal subunit protein uS15 (89 aa).

This sequence belongs to the universal ribosomal protein uS15 family. Part of the 30S ribosomal subunit. Forms a bridge to the 50S subunit in the 70S ribosome, contacting the 23S rRNA.

Functionally, one of the primary rRNA binding proteins, it binds directly to 16S rRNA where it helps nucleate assembly of the platform of the 30S subunit by binding and bridging several RNA helices of the 16S rRNA. In terms of biological role, forms an intersubunit bridge (bridge B4) with the 23S rRNA of the 50S subunit in the ribosome. The protein is Small ribosomal subunit protein uS15 of Heliobacterium modesticaldum (strain ATCC 51547 / Ice1).